The following is a 102-amino-acid chain: NADH-quinone oxidoreductase subunit K (102 aa).

Transmembrane regions (helical) follow at residues 6-26 (LEHGLAVAGILFCLGLVGLMV), 30-50 (ILFVLMSLEVMMNASALAFIV), and 62-82 (VMFILVISLAAAEASIGLAIL).

It belongs to the complex I subunit 4L family. In terms of assembly, NDH-1 is composed of 13 different subunits. Subunits NuoA, H, J, K, L, M, N constitute the membrane sector of the complex.

The protein localises to the cell inner membrane. The enzyme catalyses a quinone + NADH + 5 H(+)(in) = a quinol + NAD(+) + 4 H(+)(out). In terms of biological role, NDH-1 shuttles electrons from NADH, via FMN and iron-sulfur (Fe-S) centers, to quinones in the respiratory chain. The immediate electron acceptor for the enzyme in this species is believed to be ubiquinone. Couples the redox reaction to proton translocation (for every two electrons transferred, four hydrogen ions are translocated across the cytoplasmic membrane), and thus conserves the redox energy in a proton gradient. The chain is NADH-quinone oxidoreductase subunit K from Pseudomonas putida (strain W619).